The primary structure comprises 324 residues: Aquaporin-4 (324 aa).

Residues 1-36 are Cytoplasmic-facing; that stretch reads MSDRPAARPWGKCGSLCRREEIMVAFKGVWTQAFWK. Residues Cys13 and Cys17 are each lipidated (S-palmitoyl cysteine). Residues 37 to 57 form a helical membrane-spanning segment; the sequence is AVTAEFLAMLIFVLLSLGSTI. At 58 to 69 the chain is on the extracellular side; the sequence is NWGGKENPLPVD. The helical transmembrane segment at 70-89 threads the bilayer; that stretch reads MVLISLCFGLSIATMVQCFG. Residues 90–93 lie on the Cytoplasmic side of the membrane; it reads HISG. The discontinuously helical intramembrane region spans 94–101; it reads GHINPAVT. The NPA 1 signature appears at 97–99; that stretch reads NPA. The Cytoplasmic segment spans residues 102–115; that stretch reads VAMVCTRKISIAKS. Ser111 bears the Phosphoserine; by PKG mark. The helical transmembrane segment at 116–136 threads the bilayer; sequence VFYIAAQCLGAIIGAGILYLV. At 137–155 the chain is on the extracellular side; it reads TPPSVVGGLGVTTVHGNLT. An N-linked (GlcNAc...) asparagine glycan is attached at Asn153. The chain crosses the membrane as a helical span at residues 156–176; the sequence is AGHGLLVELIITFQLVFTIFA. The Cytoplasmic portion of the chain corresponds to 177–184; the sequence is SCDSKRTD. Position 180 is a phosphoserine; by PKC (Ser180). Residues 185 to 205 form a helical membrane-spanning segment; it reads VTGSIALAIGFSVAIGHLFAI. Asn206 carries N-linked (GlcNAc...) asparagine glycosylation. Over 206-208 the chain is Extracellular; it reads NYT. An intramembrane region (discontinuously helical) is located at residues 209–222; it reads GASMNPARSFGPAV. The NPA 2 signature appears at 213 to 215; the sequence is NPA. Residues 223-231 lie on the Extracellular side of the membrane; the sequence is IMGNWENHW. The helical transmembrane segment at 232–252 threads the bilayer; it reads IYWVGPIIGAVLAGGLYEYVF. At 253–324 the chain is on the cytoplasmic side; it reads CPDVELKRRF…PSGEIAQTQH (72 aa). A phosphoserine mark is found at Ser276 and Ser285. Thr289 is subject to Phosphothreonine. The segment covering 305–316 has biased composition (basic and acidic residues); that stretch reads DRGDEKKGKDPS. Positions 305 to 324 are disordered; that stretch reads DRGDEKKGKDPSGEIAQTQH.

Belongs to the MIP/aquaporin (TC 1.A.8) family. Homotetramer. The tetramers can form oligomeric arrays in membranes. The size of the oligomers differs between tissues and is smaller in skeletal muscle than in brain. Interaction between AQP4 oligomeric arrays in close-by cells can contribute to cell-cell adhesion. Part of a complex containing MLC1, TRPV4, HEPACAM and ATP1B1. In terms of processing, phosphorylation by PKC at Ser-180 reduces conductance by 50%. Phosphorylation by PKG at Ser-111 in response to glutamate increases conductance by 40%. Post-translationally, isoform 2: Palmitoylated on its N-terminal region. Isoform 1: Not palmitoylated. As to expression, not expressed in kidney, Detectable in gastric parietal and brain astroglial cells. The absence of AQP4 in kidney may be critical for the extreme urinary concentration that occurs in this species (up to 5,000 mosmol/kg H(2)O).

It is found in the cell membrane. Its subcellular location is the basolateral cell membrane. The protein localises to the endosome membrane. The protein resides in the sarcolemma. It localises to the cell projection. The enzyme catalyses H2O(in) = H2O(out). Its function is as follows. Forms a water-specific channel. Plays an important role in brain water homeostasis and in glymphatic solute transport. Required for a normal rate of water exchange across the blood brain interface. Required for normal levels of cerebrospinal fluid influx into the brain cortex and parenchyma along paravascular spaces that surround penetrating arteries, and for normal drainage of interstitial fluid along paravenous drainage pathways. Thereby, it is required for normal clearance of solutes from the brain interstitial fluid, including soluble beta-amyloid peptides derived from APP. Plays a redundant role in urinary water homeostasis and urinary concentrating ability. The chain is Aquaporin-4 (AQP4) from Dipodomys merriami (Merriam's kangaroo rat).